A 563-amino-acid chain; its full sequence is Dihydroxy-acid dehydratase (563 aa).

D79 contacts Mg(2+). C120 serves as a coordination point for [2Fe-2S] cluster. The Mg(2+) site is built by D121 and K122. K122 carries the post-translational modification N6-carboxylysine. C193 serves as a coordination point for [2Fe-2S] cluster. E451 provides a ligand contact to Mg(2+). The Proton acceptor role is filled by S477.

Belongs to the IlvD/Edd family. Homodimer. [2Fe-2S] cluster serves as cofactor. The cofactor is Mg(2+).

It catalyses the reaction (2R)-2,3-dihydroxy-3-methylbutanoate = 3-methyl-2-oxobutanoate + H2O. The catalysed reaction is (2R,3R)-2,3-dihydroxy-3-methylpentanoate = (S)-3-methyl-2-oxopentanoate + H2O. It functions in the pathway amino-acid biosynthesis; L-isoleucine biosynthesis; L-isoleucine from 2-oxobutanoate: step 3/4. It participates in amino-acid biosynthesis; L-valine biosynthesis; L-valine from pyruvate: step 3/4. Functionally, functions in the biosynthesis of branched-chain amino acids. Catalyzes the dehydration of (2R,3R)-2,3-dihydroxy-3-methylpentanoate (2,3-dihydroxy-3-methylvalerate) into 2-oxo-3-methylpentanoate (2-oxo-3-methylvalerate) and of (2R)-2,3-dihydroxy-3-methylbutanoate (2,3-dihydroxyisovalerate) into 2-oxo-3-methylbutanoate (2-oxoisovalerate), the penultimate precursor to L-isoleucine and L-valine, respectively. This chain is Dihydroxy-acid dehydratase, found in Sulfurovum sp. (strain NBC37-1).